Reading from the N-terminus, the 300-residue chain is Ubiquitin thioesterase otu2 (300 aa).

2 disordered regions span residues 23–73 and 89–141; these read RKQL…QQED and TAEK…SEKM. The segment covering 48-61 has biased composition (basic and acidic residues); sequence LSQKHATERQKLDK. The segment covering 62–71 has biased composition (acidic residues); sequence GDEETNETQQ. Residues 89–109 are compositionally biased toward polar residues; it reads TAEKSSVQSSLNTKENTPQQP. Residues 115-141 are compositionally biased toward basic and acidic residues; that stretch reads RQKERLERRKAEMKKMSEQAELESEKM. The region spanning 161-298 is the OTU domain; it reads LVAVDIPADG…GAHYNSLLYR (138 aa).

The protein resides in the cytoplasm. The enzyme catalyses Thiol-dependent hydrolysis of ester, thioester, amide, peptide and isopeptide bonds formed by the C-terminal Gly of ubiquitin (a 76-residue protein attached to proteins as an intracellular targeting signal).. Functionally, hydrolase that can remove conjugated ubiquitin from proteins and may therefore play an important regulatory role at the level of protein turnover by preventing degradation. This chain is Ubiquitin thioesterase otu2 (otu2), found in Schizosaccharomyces pombe (strain 972 / ATCC 24843) (Fission yeast).